Here is a 586-residue protein sequence, read N- to C-terminus: Phosphomethylpyrimidine synthase (586 aa).

The disordered stretch occupies residues methionine 1–glycine 58. A compositionally biased stretch (basic and acidic residues) spans valine 22–glutamate 39. Residues asparagine 193, methionine 222, tyrosine 251, histidine 287, serine 307–glycine 309, aspartate 348–arginine 351, and glutamate 387 each bind substrate. Zn(2+) is bound at residue histidine 391. Residue tyrosine 414 coordinates substrate. Histidine 455 provides a ligand contact to Zn(2+). Residues cysteine 535, cysteine 538, and cysteine 543 each contribute to the [4Fe-4S] cluster site.

Belongs to the ThiC family. It depends on [4Fe-4S] cluster as a cofactor.

The enzyme catalyses 5-amino-1-(5-phospho-beta-D-ribosyl)imidazole + S-adenosyl-L-methionine = 4-amino-2-methyl-5-(phosphooxymethyl)pyrimidine + CO + 5'-deoxyadenosine + formate + L-methionine + 3 H(+). It functions in the pathway cofactor biosynthesis; thiamine diphosphate biosynthesis. Functionally, catalyzes the synthesis of the hydroxymethylpyrimidine phosphate (HMP-P) moiety of thiamine from aminoimidazole ribotide (AIR) in a radical S-adenosyl-L-methionine (SAM)-dependent reaction. This is Phosphomethylpyrimidine synthase from Bacillus anthracis (strain A0248).